The following is a 173-amino-acid chain: Photosystem I assembly protein Ycf3 (173 aa).

3 TPR repeats span residues 35-68 (AYLY…EDNQ), 72-105 (GETL…NPKQ), and 120-153 (GRMA…YPGG).

It belongs to the Ycf3 family.

It is found in the cellular thylakoid membrane. Functionally, essential for the assembly of the photosystem I (PSI) complex. May act as a chaperone-like factor to guide the assembly of the PSI subunits. The polypeptide is Photosystem I assembly protein Ycf3 (Prochlorococcus marinus (strain NATL2A)).